Reading from the N-terminus, the 1287-residue chain is Pullulanase A (1287 aa).

The N-terminal stretch at 1–44 (MRKTPSHTEKKMVYSIRSLKNGTGSVLIGASLVLLAMATPTISS) is a signal peptide. Residues 42–139 (ISSDESTPTT…VTTETKAEEP (98 aa)) form a disordered region. Low complexity predominate over residues 48 to 61 (TPTTNEPNNRNTTT). A compositionally biased stretch (polar residues) spans 79–90 (DISSPGNANASL). 2 stretches are compositionally biased toward low complexity: residues 99 to 113 (TEPTTPAASPADPAP) and 122 to 133 (EPTTSTSPVTTE). Substrate-binding positions include 163-165 (WTW), Trp-175, Asp-221, 270-272 (WYW), Trp-283, Lys-325, and Asn-330. Ca(2+)-binding residues include Ser-668 and Tyr-670. Residues 674–675 (YD) and Phe-750 contribute to the substrate site. Asp-785 (nucleophile) is an active-site residue. Catalysis depends on Glu-814, which acts as the Proton donor. Trp-816 lines the substrate pocket. The Ca(2+) site is built by Met-835, Thr-838, and Asp-839. Substrate contacts are provided by Asp-846, Arg-849, and Tyr-856. Residues Asp-889 and Asp-893 each contribute to the Ca(2+) site. Residues Asn-903, Lys-976, and 996–998 (DSY) contribute to the substrate site. Asp-999 provides a ligand contact to Ca(2+). Residues 1147-1255 (VSQNGTSHES…TPDRQAELPN (109 aa)) form a disordered region. Residues 1156-1203 (STAEEKPDSTPSKPEHQNEASHPAHQDPAPEARPDSTKPDAKVADAEN) are compositionally biased toward basic and acidic residues. Residues 1212 to 1225 (SQAEQPAQEAQASS) are compositionally biased toward low complexity. The span at 1228–1239 (EAVRKESVENSS) shows a compositional bias: basic and acidic residues. Residues 1253-1257 (LPNTG) carry the LPXTG sorting signal motif. Thr-1256 bears the Pentaglycyl murein peptidoglycan amidated threonine mark. The propeptide at 1257-1287 (GIKNENKLLFAGISLLALLGLGFLLKNKKEN) is removed by sortase.

It belongs to the glycosyl hydrolase 13 family.

It localises to the secreted. The protein resides in the cell wall. It is found in the cell surface. The enzyme catalyses Hydrolysis of (1-&gt;6)-alpha-D-glucosidic linkages in pullulan, amylopectin and glycogen, and in the alpha- and beta-limit dextrins of amylopectin and glycogen.. With respect to regulation, inhibited by 4-O-alpha-D-glucopyranosylmoranoline (G1M). Its function is as follows. Virulence factor. Involved in the degradation of glycogen of the mammalian host cells. Hydrolyzes the alpha-1,6-branchpoints of glycogen. Hydrolyzes pullulan. Does not hydrolyze dextran. Binds to mouse lung alveolar type II cells that are rich in glycogen stores. Is an alpha-glucan-specific carbohydrate-binding protein, which binds to amylose (pure alpha-(1,4)-linked glucose), amylopectin (alpha-(1,4)-linked glucose with alpha-(1,6) branch points), pullulan (linear polymer of mixed alpha-(1,4)- and alpha-(1,6)-linked glucose) and glycogen (similar to amylopectin with more frequent alpha-(1,6) branch points) in vitro. Does not bind to dextran (a linear polymer of alpha-(1,6)-linked glucose). The chain is Pullulanase A from Streptococcus pneumoniae.